The chain runs to 141 residues: uncharacterized protein (141 aa).

2 consecutive transmembrane segments (helical) span residues 64–84 (IAAV…IEAI) and 112–132 (IVGS…LVLI).

It localises to the cell membrane. This is an uncharacterized protein from Sinorhizobium fredii (strain NBRC 101917 / NGR234).